The sequence spans 824 residues: MQERYIPKNVEGKWQEIWEENKTFTVTEDPSKPKYYLLEMFPYPSGRIHMGHVRNYSIGDVVGRFKRMRGFNVLHPMGWDAFGMPAENAAIKHGSHPAKWTYENIDYMRSQLKKMGLSYDWGRELATCDVDYYKWEQKMFLEMYEKGLVYKKSSFVNWCPACETVLANEQVEDGCCWRCDSDVTQKELDQWFFRITRYAEELLEDTWNLPGWPERVLVMQRNWIGKSFGCEIDFPVEGKVEKVKVFTTRQDTLYGATFMSLAPEHPQALELTTPERRAEVEAFIDKVKKTDKIKRTAEDFEKEGVFTGAYCINPVTNLRMPVYLANFVLLDYGTGAVMAVPTHDQRDFEFARTYDLPLQVVIQPEGETLDPAAMTAAYTEVGTMVNSGPFNGMKSDEAKEKIADYLEQEGVGTKTVNYRLRDWGISRQRYWGNPIPVINCDICGVVPVPDKDLPVVLPMDAEFTGEGGNPLARVESFVNVTCPQCGAEARRETDTMDTFVQSSWYFLRYCCPDFACGPIDRARAGYWMPVDQYIGGIEHAVLHLLYSRFFTKALRDLGYVTVAEPFKNLLTQGMVIKDGAKMSKSKGNVVDPDALIERYGADTARLFTLFAAPPEKDLDWSDQGVEGSFRFLNRVWRLVFEVLPFIGSAGKPDPAALGDGARDLRRTVHKTIRKVTDDLDERFHFNTAISAVMELVNAIQSFEPKNAPENAPVLREAVESVVQLLAPFVPHVAEELWESLGHQGGVEASGWPSYDPEATVEEELLIVVQVNGKLRGKVTVAVDAGEEQVKAAAFADDKVKPWLDGKQIRKAIYVPGKLLNIVVG.

The 'HIGH' region motif lies at 42 to 52 (PYPSGRIHMGH). A 'KMSKS' region motif is present at residues 581–585 (KMSKS). K584 is an ATP binding site.

This sequence belongs to the class-I aminoacyl-tRNA synthetase family.

It localises to the cytoplasm. The catalysed reaction is tRNA(Leu) + L-leucine + ATP = L-leucyl-tRNA(Leu) + AMP + diphosphate. The chain is Leucine--tRNA ligase from Geobacter sulfurreducens (strain ATCC 51573 / DSM 12127 / PCA).